The sequence spans 260 residues: Thiazole synthase (260 aa).

Catalysis depends on lysine 102, which acts as the Schiff-base intermediate with DXP. 1-deoxy-D-xylulose 5-phosphate contacts are provided by residues glycine 163, 189–190 (AG), and 211–212 (NT).

It belongs to the ThiG family. As to quaternary structure, homotetramer. Forms heterodimers with either ThiH or ThiS.

The protein resides in the cytoplasm. It carries out the reaction [ThiS sulfur-carrier protein]-C-terminal-Gly-aminoethanethioate + 2-iminoacetate + 1-deoxy-D-xylulose 5-phosphate = [ThiS sulfur-carrier protein]-C-terminal Gly-Gly + 2-[(2R,5Z)-2-carboxy-4-methylthiazol-5(2H)-ylidene]ethyl phosphate + 2 H2O + H(+). Its pathway is cofactor biosynthesis; thiamine diphosphate biosynthesis. Catalyzes the rearrangement of 1-deoxy-D-xylulose 5-phosphate (DXP) to produce the thiazole phosphate moiety of thiamine. Sulfur is provided by the thiocarboxylate moiety of the carrier protein ThiS. In vitro, sulfur can be provided by H(2)S. This is Thiazole synthase from Geobacter metallireducens (strain ATCC 53774 / DSM 7210 / GS-15).